A 213-amino-acid chain; its full sequence is Iron sulfur cluster assembly protein 1, mitochondrial (213 aa).

The protein belongs to the NifU family. As to quaternary structure, component of the core Fe-S cluster (ISC) assembly machinery. It depends on [2Fe-2S] cluster as a cofactor.

The protein resides in the mitochondrion matrix. The protein operates within cofactor biosynthesis; iron-sulfur cluster biosynthesis. In terms of biological role, scaffold protein for the de novo synthesis of iron-sulfur (Fe-S) clusters within mitochondria, which is required for maturation of both mitochondrial and cytoplasmic [2Fe-2S] and [4Fe-4S] proteins. First, a [2Fe-2S] cluster is transiently assembled on the scaffold protein ISU1. In a second step, the cluster is released from ISU1, transferred to a glutaredoxin, followed by the formation of mitochondrial [2Fe-2S] proteins, the synthesis of [4Fe-4S] clusters and their target-specific insertion into the recipient apoproteins. Cluster assembly on ISU1 depends on the function of the cysteine desulfurase complex NFS1-ISD11, which serves as the sulfur donor for cluster synthesis, the iron-binding protein frataxin as the putative iron donor, and the electron transfer chain comprised of ferredoxin reductase and ferredoxin, which receive their electrons from NADH. The chain is Iron sulfur cluster assembly protein 1, mitochondrial (ISU1) from Candida glabrata (strain ATCC 2001 / BCRC 20586 / JCM 3761 / NBRC 0622 / NRRL Y-65 / CBS 138) (Yeast).